The primary structure comprises 325 residues: Biotin synthase (325 aa).

In terms of domain architecture, Radical SAM core spans 51–280 (FMGRKADLCT…NVYIRYAGGR (230 aa)). Residues C69, C73, and C76 each contribute to the [4Fe-4S] cluster site. [2Fe-2S] cluster is bound by residues S113, C145, C205, and R275.

The protein belongs to the radical SAM superfamily. Biotin synthase family. In terms of assembly, homodimer. [4Fe-4S] cluster is required as a cofactor. It depends on [2Fe-2S] cluster as a cofactor.

The catalysed reaction is (4R,5S)-dethiobiotin + (sulfur carrier)-SH + 2 reduced [2Fe-2S]-[ferredoxin] + 2 S-adenosyl-L-methionine = (sulfur carrier)-H + biotin + 2 5'-deoxyadenosine + 2 L-methionine + 2 oxidized [2Fe-2S]-[ferredoxin]. Its pathway is cofactor biosynthesis; biotin biosynthesis; biotin from 7,8-diaminononanoate: step 2/2. In terms of biological role, catalyzes the conversion of dethiobiotin (DTB) to biotin by the insertion of a sulfur atom into dethiobiotin via a radical-based mechanism. The sequence is that of Biotin synthase from Clostridioides difficile (strain 630) (Peptoclostridium difficile).